A 551-amino-acid polypeptide reads, in one-letter code: CTP synthase (551 aa).

Residues Met1 to Ile273 form an amidoligase domain region. Position 21 (Ser21) interacts with CTP. Residue Ser21 participates in UTP binding. Residues Ser22 to Leu27 and Asp79 each bind ATP. Residues Asp79 and Glu147 each contribute to the Mg(2+) site. CTP contacts are provided by residues Asp154–Glu156, Lys194–Gln199, and Lys230. Residues Lys194–Gln199 and Lys230 contribute to the UTP site. The region spanning Thr298–Gly551 is the Glutamine amidotransferase type-1 domain. Residue Gly360 coordinates L-glutamine. Cys387 serves as the catalytic Nucleophile; for glutamine hydrolysis. Residues Leu388 to Gln391, Glu411, and Arg479 each bind L-glutamine. Active-site residues include His524 and Glu526.

The protein belongs to the CTP synthase family. Homotetramer.

The catalysed reaction is UTP + L-glutamine + ATP + H2O = CTP + L-glutamate + ADP + phosphate + 2 H(+). It carries out the reaction L-glutamine + H2O = L-glutamate + NH4(+). The enzyme catalyses UTP + NH4(+) + ATP = CTP + ADP + phosphate + 2 H(+). It participates in pyrimidine metabolism; CTP biosynthesis via de novo pathway; CTP from UDP: step 2/2. Its activity is regulated as follows. Allosterically activated by GTP, when glutamine is the substrate; GTP has no effect on the reaction when ammonia is the substrate. The allosteric effector GTP functions by stabilizing the protein conformation that binds the tetrahedral intermediate(s) formed during glutamine hydrolysis. Inhibited by the product CTP, via allosteric rather than competitive inhibition. In terms of biological role, catalyzes the ATP-dependent amination of UTP to CTP with either L-glutamine or ammonia as the source of nitrogen. Regulates intracellular CTP levels through interactions with the four ribonucleotide triphosphates. The protein is CTP synthase of Desulfotalea psychrophila (strain LSv54 / DSM 12343).